The following is a 136-amino-acid chain: Ergosterol biosynthetic protein 28 (136 aa).

A run of 4 helical transmembrane segments spans residues 18-34, 56-72, 79-95, and 109-125; these read VVVS…SFLT, FGIW…YCAY, VYFL…FHFL, and GLLS…WFMA.

This sequence belongs to the ERG28 family. In terms of assembly, heterotetramer of erg25, erg26, erg27 and erg28. Erg28 acts as a scaffold to tether erg27 and other 4,4-demethylation-related enzymes, forming a demethylation enzyme complex, in the endoplasmic reticulum.

It is found in the endoplasmic reticulum membrane. The protein operates within steroid metabolism; ergosterol biosynthesis. Its function is as follows. Part of the third module of ergosterol biosynthesis pathway that includes by the late steps of the pathway. Erg28 has a role as a scaffold to help anchor the catalytic components of the C-4 demethylation complex erg25, erg26 and erg27 to the endoplasmic reticulum. The third module or late pathway involves the ergosterol synthesis itself through consecutive reactions that mainly occur in the endoplasmic reticulum (ER) membrane. Firstly, the squalene synthase erg9 catalyzes the condensation of 2 farnesyl pyrophosphate moieties to form squalene, which is the precursor of all steroids. Secondly, squalene is converted into lanosterol by the consecutive action of the squalene epoxidase erg1 and the lanosterol synthase erg7. The lanosterol 14-alpha-demethylase erg11/cyp1 catalyzes C14-demethylation of lanosterol to produce 4,4'-dimethyl cholesta-8,14,24-triene-3-beta-ol. In the next steps, a complex process involving various demethylation, reduction and desaturation reactions catalyzed by the C-14 reductase erg24 and the C-4 demethylation complex erg25-erg26-erg27 leads to the production of zymosterol. Erg28 likely functions in the C-4 demethylation complex reaction by tethering erg26 and Erg27 to the endoplasmic reticulum or to facilitate interaction between these proteins. Then, the sterol 24-C-methyltransferase erg6 catalyzes the methyl transfer from S-adenosyl-methionine to the C-24 of zymosterol to form fecosterol. The C-8 sterol isomerase erg2 catalyzes the reaction which results in unsaturation at C-7 in the B ring of sterols and thus converts fecosterol to episterol. The sterol-C5-desaturases erg31 and erg32 then catalyze the introduction of a C-5 double bond in the B ring to produce 5-dehydroepisterol. The C-22 sterol desaturase erg5 further converts 5-dehydroepisterol into ergosta-5,7,22,24(28)-tetraen-3beta-ol by forming the C-22(23) double bond in the sterol side chain. Finally, ergosta-5,7,22,24(28)-tetraen-3beta-ol is substrate of the C-24(28) sterol reductase erg4 to produce ergosterol. In the genus Schizosaccharomyces, a second route exists between lanosterol and fecosterol, via the methylation of lanosterol to eburicol by erg6, followed by C14-demethylation by erg11/cyp1 and C4-demethylation by the demethylation complex erg25-erg26-erg27. Functionally, extends the chronological lifespan when overexpressed. This Schizosaccharomyces pombe (strain 972 / ATCC 24843) (Fission yeast) protein is Ergosterol biosynthetic protein 28.